The chain runs to 420 residues: Histidine--tRNA ligase (420 aa).

This sequence belongs to the class-II aminoacyl-tRNA synthetase family. Homodimer.

It is found in the cytoplasm. The catalysed reaction is tRNA(His) + L-histidine + ATP = L-histidyl-tRNA(His) + AMP + diphosphate + H(+). The protein is Histidine--tRNA ligase of Macrococcus caseolyticus (strain JCSC5402) (Macrococcoides caseolyticum).